Here is a 179-residue protein sequence, read N- to C-terminus: Large ribosomal subunit protein uL5 (179 aa).

Belongs to the universal ribosomal protein uL5 family. As to quaternary structure, part of the 50S ribosomal subunit; part of the 5S rRNA/L5/L18/L25 subcomplex. Contacts the 5S rRNA and the P site tRNA. Forms a bridge to the 30S subunit in the 70S ribosome.

In terms of biological role, this is one of the proteins that bind and probably mediate the attachment of the 5S RNA into the large ribosomal subunit, where it forms part of the central protuberance. In the 70S ribosome it contacts protein S13 of the 30S subunit (bridge B1b), connecting the 2 subunits; this bridge is implicated in subunit movement. Contacts the P site tRNA; the 5S rRNA and some of its associated proteins might help stabilize positioning of ribosome-bound tRNAs. The polypeptide is Large ribosomal subunit protein uL5 (Chromobacterium violaceum (strain ATCC 12472 / DSM 30191 / JCM 1249 / CCUG 213 / NBRC 12614 / NCIMB 9131 / NCTC 9757 / MK)).